The following is a 429-amino-acid chain: Enolase (429 aa).

Position 163 (glutamine 163) interacts with (2R)-2-phosphoglycerate. The Proton donor role is filled by glutamate 205. Mg(2+) contacts are provided by aspartate 242, glutamate 287, and aspartate 314. Residues lysine 339, arginine 368, serine 369, and lysine 390 each coordinate (2R)-2-phosphoglycerate. Residue lysine 339 is the Proton acceptor of the active site.

This sequence belongs to the enolase family. In terms of assembly, homooctamer. Requires Mg(2+) as cofactor.

It is found in the cytoplasm. The protein localises to the secreted. It localises to the cell surface. The enzyme catalyses (2R)-2-phosphoglycerate = phosphoenolpyruvate + H2O. The protein operates within carbohydrate degradation; glycolysis; pyruvate from D-glyceraldehyde 3-phosphate: step 4/5. Its function is as follows. Catalyzes the reversible conversion of 2-phosphoglycerate (2-PG) into phosphoenolpyruvate (PEP). It is essential for the degradation of carbohydrates via glycolysis. The protein is Enolase of Zymomonas mobilis subsp. mobilis (strain ATCC 31821 / ZM4 / CP4).